Here is a 312-residue protein sequence, read N- to C-terminus: Taste receptor type 2 member 103 (312 aa).

Topologically, residues 1 to 16 are extracellular; it reads MVVTMRAALRLMLIST. The chain crosses the membrane as a helical span at residues 17–37; that stretch reads VSLELIIGILANVFIALVNII. Over 38–65 the chain is Cytoplasmic; sequence DWIKRGKISAVDKIYMGLAISRTAFVLS. A helical membrane pass occupies residues 66–86; that stretch reads VITGFLIAFLDPASLGIGIMI. The Extracellular segment spans residues 87–92; it reads RLLTMS. Residues 93-113 form a helical membrane-spanning segment; the sequence is WTVTNHFSVWFATCLSIFYFL. Over 114 to 133 the chain is Cytoplasmic; that stretch reads KITNFSNTVFLALKWKVKKV. The helical transmembrane segment at 134–154 threads the bilayer; the sequence is VSVTLVVSLIILFINVIVIHI. Topologically, residues 155-184 are extracellular; the sequence is YTDRFQVNMVQKCGANNTLRAYGLFLSIST. Asn170 is a glycosylation site (N-linked (GlcNAc...) asparagine). A helical transmembrane segment spans residues 185-205; sequence VFTFIPFTASLTMFLLLIFSL. At 206–229 the chain is on the cytoplasmic side; that stretch reads WRHLKTMHHNATGSRDVSTVAHIK. A helical transmembrane segment spans residues 230-250; it reads GLQTVVAFLLLYTVFAMSLFS. The Extracellular segment spans residues 251 to 264; the sequence is QSLSIDAQHTNLLS. A helical membrane pass occupies residues 265–285; sequence HFLRCIGVAFPSGHSCALILG. Over 286 to 312 the chain is Cytoplasmic; it reads NNKLRQASLSVIFWLRCKYKHTENQGP.

The protein belongs to the G-protein coupled receptor T2R family.

Its subcellular location is the membrane. Gustducin-coupled receptor implicated in the perception of bitter compounds in the oral cavity and the gastrointestinal tract. Signals through PLCB2 and the calcium-regulated cation channel TRPM5. This Rattus norvegicus (Rat) protein is Taste receptor type 2 member 103.